Consider the following 152-residue polypeptide: Deoxyuridine 5'-triphosphate nucleotidohydrolase (152 aa).

Substrate contacts are provided by residues 62–64 (RSG), Asn75, and 79–81 (TVD).

Belongs to the dUTPase family. The cofactor is Mg(2+).

It catalyses the reaction dUTP + H2O = dUMP + diphosphate + H(+). It functions in the pathway pyrimidine metabolism; dUMP biosynthesis; dUMP from dCTP (dUTP route): step 2/2. Functionally, this enzyme is involved in nucleotide metabolism: it produces dUMP, the immediate precursor of thymidine nucleotides and it decreases the intracellular concentration of dUTP so that uracil cannot be incorporated into DNA. This is Deoxyuridine 5'-triphosphate nucleotidohydrolase from Leifsonia xyli subsp. xyli (strain CTCB07).